We begin with the raw amino-acid sequence, 178 residues long: Ribosome maturation factor RimM (178 aa).

In terms of domain architecture, PRC barrel spans 100 to 173 (ADEYFIHQLY…QIVVRLLPGL (74 aa)).

Belongs to the RimM family. Binds ribosomal protein uS19.

The protein localises to the cytoplasm. In terms of biological role, an accessory protein needed during the final step in the assembly of 30S ribosomal subunit, possibly for assembly of the head region. Essential for efficient processing of 16S rRNA. May be needed both before and after RbfA during the maturation of 16S rRNA. It has affinity for free ribosomal 30S subunits but not for 70S ribosomes. This Roseiflexus castenholzii (strain DSM 13941 / HLO8) protein is Ribosome maturation factor RimM.